The chain runs to 379 residues: Chaperone protein DnaJ (379 aa).

The region spanning 5 to 70 is the J domain; sequence DYYEVLGVAK…QKRAAYDQYG (66 aa). The CR-type zinc finger occupies 139–217; sequence GYDTQIRVPS…CHGAGKVKET (79 aa). 8 residues coordinate Zn(2+): C152, C155, C169, C172, C191, C194, C205, and C208. CXXCXGXG motif repeat units follow at residues 152–159, 169–176, 191–198, and 205–212; these read CEICHGSG, CPTCSGSG, CPKCHGTG, and CGHCHGAG.

Belongs to the DnaJ family. As to quaternary structure, homodimer. The cofactor is Zn(2+).

It localises to the cytoplasm. In terms of biological role, participates actively in the response to hyperosmotic and heat shock by preventing the aggregation of stress-denatured proteins and by disaggregating proteins, also in an autonomous, DnaK-independent fashion. Unfolded proteins bind initially to DnaJ; upon interaction with the DnaJ-bound protein, DnaK hydrolyzes its bound ATP, resulting in the formation of a stable complex. GrpE releases ADP from DnaK; ATP binding to DnaK triggers the release of the substrate protein, thus completing the reaction cycle. Several rounds of ATP-dependent interactions between DnaJ, DnaK and GrpE are required for fully efficient folding. Also involved, together with DnaK and GrpE, in the DNA replication of plasmids through activation of initiation proteins. This chain is Chaperone protein DnaJ, found in Paraburkholderia phytofirmans (strain DSM 17436 / LMG 22146 / PsJN) (Burkholderia phytofirmans).